A 280-amino-acid chain; its full sequence is Fructose-1,6-bisphosphatase class 1 (280 aa).

Mg(2+)-binding residues include E64, D83, L85, and D86. Substrate contacts are provided by residues 86–89 (DGSS), Y189, and K220. Mg(2+) is bound at residue E226.

This sequence belongs to the FBPase class 1 family. As to quaternary structure, homotetramer. It depends on Mg(2+) as a cofactor.

The protein localises to the cytoplasm. The enzyme catalyses beta-D-fructose 1,6-bisphosphate + H2O = beta-D-fructose 6-phosphate + phosphate. It participates in carbohydrate biosynthesis; gluconeogenesis. This chain is Fructose-1,6-bisphosphatase class 1, found in Campylobacter jejuni subsp. jejuni serotype O:23/36 (strain 81-176).